The following is a 306-amino-acid chain: tRNA pseudouridine synthase B (306 aa).

D47 functions as the Nucleophile in the catalytic mechanism.

Belongs to the pseudouridine synthase TruB family. Type 1 subfamily.

The catalysed reaction is uridine(55) in tRNA = pseudouridine(55) in tRNA. Its function is as follows. Responsible for synthesis of pseudouridine from uracil-55 in the psi GC loop of transfer RNAs. The polypeptide is tRNA pseudouridine synthase B (Neisseria gonorrhoeae (strain NCCP11945)).